The primary structure comprises 489 residues: Rhamnulokinase (489 aa).

13–17 is a binding site for ATP; it reads ASSGR. The cysteines at positions 68 and 222 are disulfide-linked. Substrate-binding positions include glycine 83 and 236-238; that span reads HDT. The active-site Proton acceptor is the aspartate 237. Residue threonine 259 coordinates ATP. Asparagine 296 provides a ligand contact to substrate. Residue glutamine 304 coordinates ATP. An intrachain disulfide couples cysteine 353 to cysteine 370. Position 402 (glycine 402) interacts with ATP. Cysteine 413 and cysteine 417 are disulfide-bonded.

The protein belongs to the rhamnulokinase family. As to quaternary structure, monomer. Mg(2+) serves as cofactor.

It catalyses the reaction L-rhamnulose + ATP = L-rhamnulose 1-phosphate + ADP + H(+). Its pathway is carbohydrate degradation; L-rhamnose degradation; glycerone phosphate from L-rhamnose: step 2/3. In terms of biological role, involved in the catabolism of L-rhamnose (6-deoxy-L-mannose). Catalyzes the transfer of the gamma-phosphate group from ATP to the 1-hydroxyl group of L-rhamnulose to yield L-rhamnulose 1-phosphate. This chain is Rhamnulokinase, found in Escherichia coli O127:H6 (strain E2348/69 / EPEC).